Consider the following 98-residue polypeptide: MNLIDLILIAIYVIGISGLIFNKNNIINILIISELNLGTLGMLFVLASVELNDILGELSGLYILTFTAAESAIGLAIVVILYSKTGIINIRNLNKLKG.

The next 3 membrane-spanning stretches (helical) occupy residues 1 to 21 (MNLIDLILIAIYVIGISGLIF), 26 to 46 (IINILIISELNLGTLGMLFVL), and 61 to 81 (LYILTFTAAESAIGLAIVVIL).

It belongs to the complex I subunit 4L family.

Its subcellular location is the mitochondrion membrane. The catalysed reaction is a ubiquinone + NADH + 5 H(+)(in) = a ubiquinol + NAD(+) + 4 H(+)(out). Functionally, core subunit of the mitochondrial membrane respiratory chain NADH dehydrogenase (Complex I) that is believed to belong to the minimal assembly required for catalysis. Complex I functions in the transfer of electrons from NADH to the respiratory chain. The immediate electron acceptor for the enzyme is believed to be ubiquinone. The protein is NADH-ubiquinone oxidoreductase chain 4L (nad4L) of Dictyostelium citrinum (Slime mold).